The following is a 353-amino-acid chain: MITVKPGCVTFQNVRKSFGAFTAIPDLSLSIEPGTLVTLLGPSGCGKTTTLRMLAGLEHPTSGRILIGGADVTMLPANERDVSMVFQSYALFPHMTSLDNVAYGLQSSGLGKKEAREKAEEGLKLVGLAGMGHRLPAELSGGQQQRVAVARALVLEPQVLLLDEPLSNLDARLRRRVRTEIRELQQRLGFTAVYVTHDQDEALAVSDRIIVMKDGEIAQSGTPRELYEAPASSFIADFMGEANVIPCEVIGVEGTEALIRVAGVDHRLPGRNAKAGMAKLAVRPGSITIAAAGQQGLAGRVLHSAYLGGHVEYEVETDVGTLFIIDHAVERNLPPSSDVTLGFENRGIALINA.

The ABC transporter domain occupies 9–239 (VTFQNVRKSF…PASSFIADFM (231 aa)). 41–48 (GPSGCGKT) contacts ATP.

It belongs to the ABC transporter superfamily. Fe(3+) ion importer (TC 3.A.1.10) family. In terms of assembly, the complex is composed of two ATP-binding proteins (FbpC), two transmembrane proteins (FbpB) and a solute-binding protein (FbpA).

It is found in the cell inner membrane. It carries out the reaction Fe(3+)(out) + ATP + H2O = Fe(3+)(in) + ADP + phosphate + H(+). Its function is as follows. Part of the ABC transporter complex FbpABC involved in Fe(3+) ions import. Responsible for energy coupling to the transport system. The chain is Fe(3+) ions import ATP-binding protein FbpC from Rhizobium etli (strain ATCC 51251 / DSM 11541 / JCM 21823 / NBRC 15573 / CFN 42).